A 541-amino-acid chain; its full sequence is Chaperonin GroEL (541 aa).

ATP-binding positions include 29 to 32 (TIGP), 86 to 90 (DGTTT), Gly-413, and Asp-494.

The protein belongs to the chaperonin (HSP60) family. In terms of assembly, forms a cylinder of 14 subunits composed of two heptameric rings stacked back-to-back. Interacts with the co-chaperonin GroES.

The protein resides in the cytoplasm. It carries out the reaction ATP + H2O + a folded polypeptide = ADP + phosphate + an unfolded polypeptide.. Functionally, together with its co-chaperonin GroES, plays an essential role in assisting protein folding. The GroEL-GroES system forms a nano-cage that allows encapsulation of the non-native substrate proteins and provides a physical environment optimized to promote and accelerate protein folding. The chain is Chaperonin GroEL from Lachnospira eligens (strain ATCC 27750 / DSM 3376 / VPI C15-48 / C15-B4) (Eubacterium eligens).